The primary structure comprises 124 residues: Alpha-endosulfine (124 aa).

At Ser74 the chain carries Phosphoserine; by GWL. Residues Val99–Gly124 are disordered. Residues Arg113 to Gly124 show a composition bias toward polar residues.

Belongs to the endosulfine family. Phosphorylation at Ser-74 by gwl during mitosis is essential for interaction with ppp2r2d (PR55-delta) and subsequent inactivation of PP2A.

The protein localises to the cytoplasm. Its function is as follows. Protein phosphatase inhibitor that specifically inhibits protein phosphatase 2A (PP2A) during mitosis. When phosphorylated at Ser-67 during mitosis, specifically interacts with ppp2r2d (PR55-delta) and inhibits its activity, leading to inactivation of PP2A, an essential condition to keep cyclin-B1-CDK1 activity high during M phase. In Danio rerio (Zebrafish), this protein is Alpha-endosulfine (ensa).